We begin with the raw amino-acid sequence, 867 residues long: Putative tyrosine-protein kinase F09A5.2 (867 aa).

2 consecutive transmembrane segments (helical) span residues 45 to 65 and 355 to 375; these read VMKI…FATS and LLLI…AFFV. N-linked (GlcNAc...) asparagine glycosylation is found at Asn395 and Asn423. Residues 467–757 enclose the Protein kinase domain; that stretch reads VQEDHLLGNG…FNEMRGEITV (291 aa). 473 to 481 provides a ligand contact to ATP; the sequence is LGNGAFANV. N-linked (GlcNAc...) asparagine glycans are attached at residues Asn496 and Asn500. Lys516 provides a ligand contact to ATP. Asn585 carries an N-linked (GlcNAc...) asparagine glycan. Asp626 serves as the catalytic Proton acceptor. Disordered regions lie at residues 782–821 and 848–867; these read LTMQ…GTCA and SKSM…TYQS. The segment covering 801–810 has biased composition (acidic residues); the sequence is DMDEDGDYDS. Residues 858–867 are compositionally biased toward polar residues; sequence SNSTVSTYQS. An N-linked (GlcNAc...) asparagine glycan is attached at Asn859.

It belongs to the protein kinase superfamily. Tyr protein kinase family.

Its subcellular location is the membrane. The enzyme catalyses L-tyrosyl-[protein] + ATP = O-phospho-L-tyrosyl-[protein] + ADP + H(+). In Caenorhabditis elegans, this protein is Putative tyrosine-protein kinase F09A5.2.